Here is a 2403-residue protein sequence, read N- to C-terminus: Highly reducing polyketide synthase fogA (2403 aa).

The Ketosynthase family 3 (KS3) domain occupies 3 to 428 (DDPPCIVGMA…GANAHVILES (426 aa)). Catalysis depends on for beta-ketoacyl synthase activity residues Cys-176, His-311, and His-350. The segment at 538-858 (VFTGQGAQYA…PYAPSLVRKE (321 aa)) is malonyl-CoA:ACP transacylase (MAT) domain. Ser-632 functions as the For malonyltransferase activity in the catalytic mechanism. Residues 929–1068 (HELLGTFALT…GSIRVVEPLT (140 aa)) are N-terminal hotdog fold. The dehydratase (DH) domain stretch occupies residues 929–1238 (HELLGTFALT…DARMSLYTGK (310 aa)). The region spanning 929–1241 (HELLGTFALT…MSLYTGKSSA (313 aa)) is the PKS/mFAS DH domain. The active-site Proton acceptor; for dehydratase activity is the His-961. Positions 1084-1241 (SFEASPTNRW…MSLYTGKSSA (158 aa)) are C-terminal hotdog fold. Asp-1152 acts as the Proton donor; for dehydratase activity in catalysis. The interval 1663–1981 (GATDSMFFQQ…QQDRIGKIVI (319 aa)) is enoyl reductase (ER) domain. A ketoreductase (KR) domain region spans residues 2006–2185 (VYLLIGCLGG…AVAVGLGMIS (180 aa)). The tract at residues 2280-2300 (AQNSTSSSGSNSNTPTTAAPW) is disordered. Over residues 2282-2296 (NSTSSSGSNSNTPTT) the composition is skewed to low complexity. In terms of domain architecture, Carrier spans 2320–2398 (SLNAAILRLI…GLAVVVEGKL (79 aa)). At Ser-2357 the chain carries O-(pantetheine 4'-phosphoryl)serine.

Pantetheine 4'-phosphate is required as a cofactor.

It functions in the pathway secondary metabolite biosynthesis. Functionally, highly reducing polyketide synthase; part of the gene cluster that mediates the biosynthesis of flavoglaucin and congeners (including aspergin, dihydroauroglaucin and auroglaucin), prenylated salicylaldehyde derivatives carrying a saturated or an unsaturated C-7 side chain. FogA releases the carboxylic acid (8E,10E,12E)-3,5,7-trihydroxytetradeca-8,10,12-trienoic acid as its product, as well as derivatives with one and two double bonds. FogA is indeed able to reduce the initial triketide, thus being at least partially responsible for the differently saturated heptyl side chains of flavoglaucin congeners. The oxidoreductases fogB, fogC and fogD modify the nascent polyketide in fogA-bound form and, together, fogA, fogB, fogC and fogD are necessary for the formation of the aromatic core and the cyclized PKS products are released as salicyl alcohols. In particular, fogB is responsible for oxidation of a hydroxyl group or reduction of remaining double bond(s) at the C-7 residue whereas fogD is probably involved in the reductive release of the modified PKS products. The cytochrome P450 monooxygenase fogE is then responsible for the hydroxylation at C-3 of the benzene ring. The fogE products are substrates of the prenyltransferase fogH and the prenylated benzyl alcohols are subsequently oxidized by the fogF to produce the final aryl aldehydes flavoglaucin and congeners. The short-chain dehydrogenase fogG does not seem to be involved in the biosynthesis of the prenylated salicylaldehyde derivatives. This chain is Highly reducing polyketide synthase fogA, found in Aspergillus ruber (strain CBS 135680).